We begin with the raw amino-acid sequence, 450 residues long: Tubulin alpha-3 chain (450 aa).

Glutamine 11 contacts GTP. At lysine 40 the chain carries N6-acetyllysine. Residues glutamate 71, glycine 144, threonine 145, threonine 179, asparagine 206, and asparagine 228 each coordinate GTP. Glutamate 71 is a binding site for Mg(2+). Glutamate 254 is an active-site residue.

This sequence belongs to the tubulin family. Dimer of alpha and beta chains. A typical microtubule is a hollow water-filled tube with an outer diameter of 25 nm and an inner diameter of 15 nM. Alpha-beta heterodimers associate head-to-tail to form protofilaments running lengthwise along the microtubule wall with the beta-tubulin subunit facing the microtubule plus end conferring a structural polarity. Microtubules usually have 13 protofilaments but different protofilament numbers can be found in some organisms and specialized cells. Requires Mg(2+) as cofactor. In terms of processing, undergoes a tyrosination/detyrosination cycle, the cyclic removal and re-addition of a C-terminal tyrosine residue by the enzymes tubulin tyrosine carboxypeptidase (TTCP) and tubulin tyrosine ligase (TTL), respectively. Acetylation of alpha chains at Lys-40 stabilizes microtubules and affects affinity and processivity of microtubule motors. This modification has a role in multiple cellular functions, ranging from cell motility, cell cycle progression or cell differentiation to intracellular trafficking and signaling.

It is found in the cytoplasm. It localises to the cytoskeleton. The enzyme catalyses GTP + H2O = GDP + phosphate + H(+). In terms of biological role, tubulin is the major constituent of microtubules, a cylinder consisting of laterally associated linear protofilaments composed of alpha- and beta-tubulin heterodimers. Microtubules grow by the addition of GTP-tubulin dimers to the microtubule end, where a stabilizing cap forms. Below the cap, tubulin dimers are in GDP-bound state, owing to GTPase activity of alpha-tubulin. This chain is Tubulin alpha-3 chain (TUBA3), found in Zea mays (Maize).